We begin with the raw amino-acid sequence, 359 residues long: Endoglucanase (359 aa).

A signal peptide spans 1–23 (MPLRALVAVIVTTAVMLVPRAWA). Glu53 (proton donor) is an active-site residue. The Nucleophile role is filled by Asp110.

It belongs to the glycosyl hydrolase 8 (cellulase D) family.

The enzyme catalyses Endohydrolysis of (1-&gt;4)-beta-D-glucosidic linkages in cellulose, lichenin and cereal beta-D-glucans.. In terms of biological role, the biological conversion of cellulose to glucose generally requires three types of hydrolytic enzymes: (1) Endoglucanases which cut internal beta-1,4-glucosidic bonds; (2) Exocellobiohydrolases that cut the disaccharide cellobiose from the non-reducing end of the cellulose polymer chain; (3) Beta-1,4-glucosidases which hydrolyze the cellobiose and other short cello-oligosaccharides to glucose. The protein is Endoglucanase of Cellulomonas uda.